The sequence spans 240 residues: Eukaryotic translation initiation factor 3 subunit K (240 aa).

The region spanning 41–221 is the PCI domain; that stretch reads YDKDIVLTIL…TIKTRNIDEK (181 aa).

This sequence belongs to the eIF-3 subunit K family. Component of the eukaryotic translation initiation factor 3 (eIF-3) complex.

It localises to the cytoplasm. In terms of biological role, component of the eukaryotic translation initiation factor 3 (eIF-3) complex, which is involved in protein synthesis of a specialized repertoire of mRNAs and, together with other initiation factors, stimulates binding of mRNA and methionyl-tRNAi to the 40S ribosome. The eIF-3 complex specifically targets and initiates translation of a subset of mRNAs involved in cell proliferation. This Caenorhabditis elegans protein is Eukaryotic translation initiation factor 3 subunit K.